We begin with the raw amino-acid sequence, 229 residues long: Glutathione S-transferase 1 (229 aa).

Residues 2-86 (AQFTLWSHAH…YLADKYDTER (85 aa)) enclose the GST N-terminal domain. Residues 93-229 (DHPEYYKVIQ…FEERSKALDN (137 aa)) form the GST C-terminal domain.

It belongs to the GST superfamily.

It carries out the reaction RX + glutathione = an S-substituted glutathione + a halide anion + H(+). Its function is as follows. Involved in the oxidative stress response and detoxification. The polypeptide is Glutathione S-transferase 1 (gst1) (Schizosaccharomyces pombe (strain 972 / ATCC 24843) (Fission yeast)).